The primary structure comprises 430 residues: S-adenosylmethionine synthase (430 aa).

Histidine 14 is an ATP binding site. Position 16 (aspartate 16) interacts with Mg(2+). Glutamate 42 contacts K(+). Glutamate 55 and glutamine 98 together coordinate L-methionine. Residues glutamine 98 to arginine 108 form a flexible loop region. ATP-binding positions include aspartate 164–lysine 166, lysine 254–phenylalanine 255, aspartate 263, arginine 269–lysine 270, alanine 286, and lysine 290. Position 263 (aspartate 263) interacts with L-methionine. An L-methionine-binding site is contributed by lysine 294.

The protein belongs to the AdoMet synthase family. As to quaternary structure, homotetramer; dimer of dimers. Requires Mg(2+) as cofactor. K(+) is required as a cofactor.

It is found in the cytoplasm. The catalysed reaction is L-methionine + ATP + H2O = S-adenosyl-L-methionine + phosphate + diphosphate. It functions in the pathway amino-acid biosynthesis; S-adenosyl-L-methionine biosynthesis; S-adenosyl-L-methionine from L-methionine: step 1/1. Catalyzes the formation of S-adenosylmethionine (AdoMet) from methionine and ATP. The overall synthetic reaction is composed of two sequential steps, AdoMet formation and the subsequent tripolyphosphate hydrolysis which occurs prior to release of AdoMet from the enzyme. In Bacteroides fragilis (strain ATCC 25285 / DSM 2151 / CCUG 4856 / JCM 11019 / LMG 10263 / NCTC 9343 / Onslow / VPI 2553 / EN-2), this protein is S-adenosylmethionine synthase.